We begin with the raw amino-acid sequence, 219 residues long: GTP-binding protein drn-1 (219 aa).

GTP contacts are provided by residues 37–44 (GAGGVGKS), 56–62 (NENYVPT), 85–89 (DTTGS), 146–149 (NKKD), and 177–178 (AK). Residues 59–67 (YVPTIEDTY) carry the Effector region motif. Cysteine methyl ester is present on Cys-216. Cys-216 is lipidated: S-geranylgeranyl cysteine. Residues 217 to 219 (HIM) constitute a propeptide, removed in mature form.

This sequence belongs to the small GTPase superfamily. Di-Ras family. Interacts with epac-1 (via C-terminus). In terms of tissue distribution, expressed specifically in neurons including the nerve ring, ventral and dorsal nerve cord motor neurons and tail ganglia.

It localises to the cell membrane. Functionally, displays low GTPase activity and exists predominantly in the GTP-bound form. Together with epac-1, may regulate acetylcholine release at the neuromuscular junctions probably downstream of G-protein gsa-1 and adenylate cyclase acy-1. This is GTP-binding protein drn-1 from Caenorhabditis elegans.